Consider the following 61-residue polypeptide: DNA gyrase inhibitor YacG (61 aa).

4 residues coordinate Zn(2+): Cys-14, Cys-17, Cys-29, and Cys-33.

Belongs to the DNA gyrase inhibitor YacG family. Interacts with GyrB. It depends on Zn(2+) as a cofactor.

Its function is as follows. Inhibits all the catalytic activities of DNA gyrase by preventing its interaction with DNA. Acts by binding directly to the C-terminal domain of GyrB, which probably disrupts DNA binding by the gyrase. This is DNA gyrase inhibitor YacG from Zymomonas mobilis subsp. mobilis (strain ATCC 31821 / ZM4 / CP4).